We begin with the raw amino-acid sequence, 484 residues long: MITIDKILEILKNDHNFREILFHEHYYYNWTQNVTFNALSYDSRQISSDTLFFAKGATFKKEYLDSAITAGLSFYVSETDYGADIPVILVNDIKKAMSLISMSFYNNPQNKLKLLAFTGTKGKTTAAYFAYHMLKVNHRPAMLSTMNTTLDGKSFFKSHLTTPESLDLFRMMATAVENQMTHLIMEVSSQAYLTKRVYGLTFDVGVFLNISPDHIGPIEHPTFEDYFFHKRLLMENSNAVVVNSQMDHFNIVKEQVEYIPHDFYGDYSENVITESKAFSFHVKGKLENTYDIKLIGKFNQENAIAAGLACLRLGVSIEDIKNGIAQTTVPGRMEVLTQTNGAKIFVDYAHNGDSLKKLLAVVEEHQKGDIILVLGAPGNKGQSRRKDFGDVINQHPNLQVILTADDPNFEDPLVISQEIASHINRPVTIIIDREEAIANASTLTNCKLDAIIIAGKGADAYQIIKGNRDNYSGDLEVAKKYLKR.

Ser43 is a binding site for UDP-N-acetyl-alpha-D-muramoyl-L-alanyl-D-glutamate. 119-125 contributes to the ATP binding site; sequence GTKGKTT. Residues 161–162, Ser188, and Arg196 each bind UDP-N-acetyl-alpha-D-muramoyl-L-alanyl-D-glutamate; that span reads TT. Lys230 bears the N6-carboxylysine mark. Residues 405–408 carry the L-lysine recognition motif motif; the sequence is DDPN.

This sequence belongs to the MurCDEF family. MurE subfamily. Carboxylation is probably crucial for Mg(2+) binding and, consequently, for the gamma-phosphate positioning of ATP.

It localises to the cytoplasm. The catalysed reaction is UDP-N-acetyl-alpha-D-muramoyl-L-alanyl-D-glutamate + L-lysine + ATP = UDP-N-acetyl-alpha-D-muramoyl-L-alanyl-gamma-D-glutamyl-L-lysine + ADP + phosphate + H(+). The protein operates within cell wall biogenesis; peptidoglycan biosynthesis. Functionally, catalyzes the addition of L-lysine to the nucleotide precursor UDP-N-acetylmuramoyl-L-alanyl-D-glutamate (UMAG) in the biosynthesis of bacterial cell-wall peptidoglycan. The polypeptide is UDP-N-acetylmuramoyl-L-alanyl-D-glutamate--L-lysine ligase (Streptococcus agalactiae serotype V (strain ATCC BAA-611 / 2603 V/R)).